The sequence spans 261 residues: Transcription repressor OFP15 (261 aa).

Residues 1–28 (MKLPFLNKNHSTSSYSSNSSSSSWPWPS) form a disordered region. Residues 11 to 28 (STSSYSSNSSSSSWPWPS) show a composition bias toward low complexity. In terms of domain architecture, OVATE spans 112 to 172 (FSLESDDPYS…FAAFVDLLMN (61 aa)).

Interacts with BLH1 and BLH3. Expressed in roots, cauline leaves, shoots, flower buds and siliques.

It is found in the nucleus. In terms of biological role, transcriptional repressor that regulates multiple aspects of plant growth and development through the regulation of BEL1-LIKE (BLH) and KNOX TALE (KNAT) homeodomain transcription factors. The sequence is that of Transcription repressor OFP15 (OFP15) from Arabidopsis thaliana (Mouse-ear cress).